Reading from the N-terminus, the 490-residue chain is Serine hydroxymethyltransferase, mitochondrial (490 aa).

A mitochondrion-targeting transit peptide spans 1-20 (MFPRASALAKCMATVHRRGL). Lysine 265 is modified (N6-(pyridoxal phosphate)lysine).

The protein belongs to the SHMT family. Homotetramer. Interacts with NAP1. Pyridoxal 5'-phosphate serves as cofactor.

The protein localises to the mitochondrion. The enzyme catalyses (6R)-5,10-methylene-5,6,7,8-tetrahydrofolate + glycine + H2O = (6S)-5,6,7,8-tetrahydrofolate + L-serine. It functions in the pathway one-carbon metabolism; tetrahydrofolate interconversion. Its function is as follows. Interconversion of serine and glycine. The sequence is that of Serine hydroxymethyltransferase, mitochondrial (SHM1) from Saccharomyces cerevisiae (strain ATCC 204508 / S288c) (Baker's yeast).